The following is a 155-amino-acid chain: Endoribonuclease YbeY (155 aa).

Zn(2+) is bound by residues His116, His120, and His126.

The protein belongs to the endoribonuclease YbeY family. The cofactor is Zn(2+).

It is found in the cytoplasm. Its function is as follows. Single strand-specific metallo-endoribonuclease involved in late-stage 70S ribosome quality control and in maturation of the 3' terminus of the 16S rRNA. The polypeptide is Endoribonuclease YbeY (Colwellia psychrerythraea (strain 34H / ATCC BAA-681) (Vibrio psychroerythus)).